The sequence spans 391 residues: Curcumin synthase 2 (391 aa).

The active site involves C166.

The protein belongs to the thiolase-like superfamily. Chalcone/stilbene synthases family. As to quaternary structure, homodimer.

The enzyme catalyses (E)-feruloylacetyl-CoA + (E)-feruloyl-CoA + H2O = curcumin + CO2 + 2 CoA. It participates in secondary metabolite biosynthesis; flavonoid biosynthesis. Its function is as follows. Catalyzes the synthesis of curcumin by condensing feruloyl-CoA with a diketide-CoA in the curcuminoid biosynthesis. This is Curcumin synthase 2 (CURS2) from Curcuma longa (Turmeric).